Reading from the N-terminus, the 647-residue chain is 2',3'-cyclic-nucleotide 2'-phosphodiesterase/3'-nucleotidase (647 aa).

Positions 1 to 19 (MIKFSATLLATLIAASVNA) are cleaved as a signal peptide. Residues D31, H33, D76, N116, H225, H257, and H259 each contribute to the a divalent metal cation site. Substrate is bound by residues Y440 and 544-550 (YRAYGGK).

Belongs to the 5'-nucleotidase family. A divalent metal cation is required as a cofactor.

It is found in the periplasm. It carries out the reaction a nucleoside 2',3'-cyclic phosphate + H2O = a nucleoside 3'-phosphate + H(+). The catalysed reaction is a ribonucleoside 3'-phosphate + H2O = a ribonucleoside + phosphate. Functionally, this bifunctional enzyme catalyzes two consecutive reactions during ribonucleic acid degradation. Converts a 2',3'-cyclic nucleotide to a 3'-nucleotide and then the 3'-nucleotide to the corresponding nucleoside and phosphate. The protein is 2',3'-cyclic-nucleotide 2'-phosphodiesterase/3'-nucleotidase (cpdB) of Salmonella typhimurium (strain LT2 / SGSC1412 / ATCC 700720).